Reading from the N-terminus, the 326-residue chain is Glyoxylate/hydroxypyruvate reductase B (326 aa).

Residues Arg-237 and Glu-266 contribute to the active site. His-285 acts as the Proton donor in catalysis.

The protein belongs to the D-isomer specific 2-hydroxyacid dehydrogenase family. GhrB subfamily. In terms of assembly, homodimer.

The protein resides in the cytoplasm. It catalyses the reaction glycolate + NADP(+) = glyoxylate + NADPH + H(+). The enzyme catalyses (R)-glycerate + NAD(+) = 3-hydroxypyruvate + NADH + H(+). The catalysed reaction is (R)-glycerate + NADP(+) = 3-hydroxypyruvate + NADPH + H(+). Catalyzes the NADPH-dependent reduction of glyoxylate and hydroxypyruvate into glycolate and glycerate, respectively. This is Glyoxylate/hydroxypyruvate reductase B from Yersinia pseudotuberculosis serotype O:1b (strain IP 31758).